The following is a 398-amino-acid chain: Galactose-3-O-sulfotransferase 2 (398 aa).

Residues Met-1–Cys-11 lie on the Cytoplasmic side of the membrane. The chain crosses the membrane as a helical; Signal-anchor for type II membrane protein span at residues Phe-12 to Leu-29. Residues His-30 to Ala-398 lie on the Lumenal side of the membrane. Residues Asn-77, Asn-133, Asn-180, Asn-288, Asn-330, and Asn-360 are each glycosylated (N-linked (GlcNAc...) asparagine).

Belongs to the galactose-3-O-sulfotransferase family.

The protein localises to the golgi apparatus. It is found in the golgi stack membrane. It participates in protein modification; carbohydrate sulfation. Its activity is regulated as follows. Strongly inhibited by Cu(2+) and Zn(2+). Transfers a sulfate group to the hydroxyl group at C3 of non-reducing beta-galactosyl residues. Acts both on type 1 (Gal-beta-1,3-GlcNAc) and type 2 (Gal-beta-1,4-GlcNAc) chains with similar efficiency. The polypeptide is Galactose-3-O-sulfotransferase 2 (GAL3ST2) (Sus scrofa (Pig)).